A 145-amino-acid polypeptide reads, in one-letter code: MKYLAQFPSILAIYCFCLLQIPSSGFPRPLADASDGLDIVKFEQMAYWASLSRQPKDNQDIYKRFLFHYSRTQEPAHPVKTGFPPVHPLMRLAAKLADRRMKTFWRRDSRATAADFTKKDYTATLGRPFFLFRPRNGRNLDFDTW.

Positions 1-25 are cleaved as a signal peptide; it reads MKYLAQFPSILAIYCFCLLQIPSSG. Propeptides lie at residues 26–64, 65–100, and 101–103; these read FPRP…IYKR, FLFH…ADRR, and MKT. The residue at position 136 (Asn136) is an Asparagine amide. Positions 139–145 are excised as a propeptide; sequence NLDFDTW.

This sequence belongs to the NmU family.

Its subcellular location is the secreted. Functionally, implicated in the regulation of circadian rhythms through autocrine and/or paracrine actions. The polypeptide is Neuromedin-S (NMS) (Bos taurus (Bovine)).